Consider the following 396-residue polypeptide: Purine ribonucleoside efflux pump NepI (396 aa).

Topologically, residues 1–21 (MSEFIAENRGADAITRPNWSA) are cytoplasmic. A helical membrane pass occupies residues 22–42 (VFSVAFCVACLIIVEFLPVSL). Residues 43-54 (LTPMAQDLGISE) are Periplasmic-facing. A helical membrane pass occupies residues 55–75 (GVAGQSVTVTAFVAMFASLFI). Topologically, residues 76–85 (TQTIQATDRC) are cytoplasmic. A helical membrane pass occupies residues 86-106 (YVVILFAVLLTLSCLLVSFAN). Serine 107 is a topological domain (periplasmic). The helical transmembrane segment at 108–128 (FSLLLIGRACLGLALGGFWAM) threads the bilayer. Topologically, residues 129–147 (SASLTMRLVPPRTVPKALS) are cytoplasmic. Residues 148-168 (VIFGAVSIALVIAAPLGSFLG) traverse the membrane as a helical segment. Topologically, residues 169-175 (ELIGWRN) are periplasmic. A helical membrane pass occupies residues 176–196 (VFNAAAVMGVLCIFWIIKSLP). Residues 197 to 215 (SLPGEPSHQKQNTFRLLQR) are Cytoplasmic-facing. Residues 216–236 (PGVMAGMIAIFMSFAGQFAFF) traverse the membrane as a helical segment. The Periplasmic segment spans residues 237–255 (TYIRPVYMNLAGFGVDGLT). The helical transmembrane segment at 256–276 (LVLLSFGIASFIGTSLSSFIL) threads the bilayer. At 277 to 281 (KRSVK) the chain is on the cytoplasmic side. A helical transmembrane segment spans residues 282–302 (LALAGAPLILAVSALVLTLWG). Residues 303-305 (SDK) lie on the Periplasmic side of the membrane. Residues 306–326 (IVATGVAIIWGLTFALVPVGW) form a helical membrane-spanning segment. At 327-343 (STWITRSLADQAEKAGS) the chain is on the cytoplasmic side. A helical transmembrane segment spans residues 344–364 (IQVAVIQLANTCGAAIGGYAL). At 365-366 (DN) the chain is on the periplasmic side. Residues 367-387 (IGLTSPLMLSGTLMLLTALLV) form a helical membrane-spanning segment. At 388–396 (TAKVKMKKS) the chain is on the cytoplasmic side.

This sequence belongs to the major facilitator superfamily. DHA1 family. NepI (TC 2.A.1.2.26) subfamily.

The protein resides in the cell inner membrane. It catalyses the reaction inosine(in) + H(+)(out) = inosine(out) + H(+)(in). The enzyme catalyses guanosine(in) + H(+)(out) = guanosine(out) + H(+)(in). Its function is as follows. Involved in the efflux of purine ribonucleosides, such as inosine and guanosine. The sequence is that of Purine ribonucleoside efflux pump NepI from Shigella boydii serotype 4 (strain Sb227).